Reading from the N-terminus, the 188-residue chain is Large ribosomal subunit protein bL35m (188 aa).

It belongs to the bacterial ribosomal protein bL35 family.

The protein resides in the mitochondrion. The protein is Large ribosomal subunit protein bL35m (MRPL35) of Bos taurus (Bovine).